A 147-amino-acid polypeptide reads, in one-letter code: Elongation factor Tu (147 aa).

The protein belongs to the GTP-binding elongation factor family. EF-Tu/EF-1A subfamily. In terms of assembly, monomer.

It localises to the cytoplasm. Its function is as follows. This protein promotes the GTP-dependent binding of aminoacyl-tRNA to the A-site of ribosomes during protein biosynthesis. The chain is Elongation factor Tu (tuf) from Fructilactobacillus sanfranciscensis (Lactobacillus sanfranciscensis).